The sequence spans 198 residues: Small ribosomal subunit protein uS7 (198 aa).

It belongs to the universal ribosomal protein uS7 family. As to quaternary structure, part of the 30S ribosomal subunit.

In terms of biological role, one of the primary rRNA binding proteins, it binds directly to 16S rRNA where it nucleates assembly of the head domain of the 30S subunit. Is located at the subunit interface close to the decoding center. In Desulfurococcus mucosus (Desulfurococcus mobilis), this protein is Small ribosomal subunit protein uS7.